A 461-amino-acid chain; its full sequence is tRNA-2-methylthio-N(6)-dimethylallyladenosine synthase (461 aa).

Residues 25–143 enclose the MTTase N-terminal domain; it reads PTYSIITHGC…LPYLIDRHLS (119 aa). Residues cysteine 34, cysteine 70, cysteine 104, cysteine 179, cysteine 183, and cysteine 186 each contribute to the [4Fe-4S] cluster site. The region spanning 165–395 is the Radical SAM core domain; the sequence is RDNEYVGYVN…LDVAYPIFYE (231 aa). The 64-residue stretch at 398 to 461 folds into the TRAM domain; that stretch reads KSYLGTIQEV…SFALTGEMVD (64 aa).

The protein belongs to the methylthiotransferase family. MiaB subfamily. As to quaternary structure, monomer. [4Fe-4S] cluster is required as a cofactor.

It is found in the cytoplasm. The catalysed reaction is N(6)-dimethylallyladenosine(37) in tRNA + (sulfur carrier)-SH + AH2 + 2 S-adenosyl-L-methionine = 2-methylsulfanyl-N(6)-dimethylallyladenosine(37) in tRNA + (sulfur carrier)-H + 5'-deoxyadenosine + L-methionine + A + S-adenosyl-L-homocysteine + 2 H(+). In terms of biological role, catalyzes the methylthiolation of N6-(dimethylallyl)adenosine (i(6)A), leading to the formation of 2-methylthio-N6-(dimethylallyl)adenosine (ms(2)i(6)A) at position 37 in tRNAs that read codons beginning with uridine. This chain is tRNA-2-methylthio-N(6)-dimethylallyladenosine synthase, found in Finegoldia magna (strain ATCC 29328 / DSM 20472 / WAL 2508) (Peptostreptococcus magnus).